Reading from the N-terminus, the 751-residue chain is ATP-dependent DNA helicase Hel308 (751 aa).

Residues Q20 and 39–46 (IPTASGKT) each bind ATP. The region spanning 26–196 (EGLLDKSKNF…WLNAKLVTDE (171 aa)) is the Helicase ATP-binding domain. Positions 143–146 (DEIH) match the DEAH box motif. The Helicase C-terminal domain occupies 235–435 (NLTDLIVDSV…VLRVHILGLI (201 aa)).

The protein belongs to the helicase family. Hel308 subfamily. In terms of assembly, monomer.

It carries out the reaction Couples ATP hydrolysis with the unwinding of duplex DNA by translocating in the 3'-5' direction.. It catalyses the reaction ATP + H2O = ADP + phosphate + H(+). In terms of biological role, DNA-dependent ATPase and 3'-5' DNA helicase that may be involved in repair of stalled replication forks. This chain is ATP-dependent DNA helicase Hel308, found in Methanococcus vannielii (strain ATCC 35089 / DSM 1224 / JCM 13029 / OCM 148 / SB).